The primary structure comprises 457 residues: Argininosuccinate lyase (457 aa).

It belongs to the lyase 1 family. Argininosuccinate lyase subfamily.

The protein localises to the cytoplasm. It catalyses the reaction 2-(N(omega)-L-arginino)succinate = fumarate + L-arginine. It functions in the pathway amino-acid biosynthesis; L-arginine biosynthesis; L-arginine from L-ornithine and carbamoyl phosphate: step 3/3. In Sodalis glossinidius (strain morsitans), this protein is Argininosuccinate lyase.